Here is a 644-residue protein sequence, read N- to C-terminus: Ribonuclease R (644 aa).

In terms of domain architecture, RNB spans 211–529; the sequence is RINYSHIPFI…LHRLLKELLF (319 aa). In terms of domain architecture, S1 motif spans 573–644; the sequence is LELLEKEFLG…ITERIKEHVS (72 aa).

This sequence belongs to the RNR ribonuclease family. RNase R subfamily.

The protein localises to the cytoplasm. It carries out the reaction Exonucleolytic cleavage in the 3'- to 5'-direction to yield nucleoside 5'-phosphates.. In terms of biological role, 3'-5' exoribonuclease that releases 5'-nucleoside monophosphates and is involved in maturation of structured RNAs. In Helicobacter pylori (strain ATCC 700392 / 26695) (Campylobacter pylori), this protein is Ribonuclease R.